A 386-amino-acid chain; its full sequence is Sulfate adenylyltransferase (386 aa).

Belongs to the sulfate adenylyltransferase family.

It carries out the reaction sulfate + ATP + H(+) = adenosine 5'-phosphosulfate + diphosphate. Its pathway is sulfur metabolism; hydrogen sulfide biosynthesis; sulfite from sulfate: step 1/3. The chain is Sulfate adenylyltransferase from Persephonella marina (strain DSM 14350 / EX-H1).